A 70-amino-acid polypeptide reads, in one-letter code: Beta sliding clamp (70 aa).

This sequence belongs to the beta sliding clamp family. Forms a ring-shaped head-to-tail homodimer around DNA which binds and tethers DNA polymerases and other proteins to the DNA. The DNA replisome complex has a single clamp-loading complex (3 tau and 1 each of delta, delta', psi and chi subunits) which binds 3 Pol III cores (1 core on the leading strand and 2 on the lagging strand) each with a beta sliding clamp dimer. Additional proteins in the replisome are other copies of gamma, psi and chi, Ssb, DNA helicase and RNA primase.

The protein localises to the cytoplasm. In terms of biological role, confers DNA tethering and processivity to DNA polymerases and other proteins. Acts as a clamp, forming a ring around DNA (a reaction catalyzed by the clamp-loading complex) which diffuses in an ATP-independent manner freely and bidirectionally along dsDNA. Initially characterized for its ability to contact the catalytic subunit of DNA polymerase III (Pol III), a complex, multichain enzyme responsible for most of the replicative synthesis in bacteria; Pol III exhibits 3'-5' exonuclease proofreading activity. The beta chain is required for initiation of replication as well as for processivity of DNA replication. This Rhodobacter capsulatus (Rhodopseudomonas capsulata) protein is Beta sliding clamp (dnaN).